Here is a 127-residue protein sequence, read N- to C-terminus: Modulator protein MzrA (127 aa).

The Cytoplasmic segment spans residues 1 to 10; sequence MQIPRMSLRQ. Residues 11-31 form a helical membrane-spanning segment; sequence LAWSGAVLLLVGTLLLAWSAV. Over 32–127 the chain is Periplasmic; that stretch reads RQQESTLAIR…RLRDNSHRFG (96 aa).

This sequence belongs to the MzrA family. Interacts with EnvZ.

It localises to the cell inner membrane. Its function is as follows. Modulates the activity of the EnvZ/OmpR two-component regulatory system, probably by directly modulating EnvZ enzymatic activity and increasing stability of phosphorylated OmpR. Links the two-component systems CpxA/CpxR and EnvZ/OmpR. The sequence is that of Modulator protein MzrA from Escherichia coli (strain K12).